We begin with the raw amino-acid sequence, 62 residues long: Bacteriocin lactacin-F subunit LafX (62 aa).

The propeptide occupies 1-14 (MKLNDKELSKIVGG).

It belongs to the bacteriocin class IIB family. As to quaternary structure, this bacteriocin depends upon the complementation of two peptides for activity: LafA and LafX. Associated with a 180 kDa bacteriocin complex.

Heat stable bacteriocin active against Enterococcus faecalis and other Lactobacilli. The sequence is that of Bacteriocin lactacin-F subunit LafX (lafX) from Lactobacillus johnsonii (strain CNCM I-12250 / La1 / NCC 533).